The primary structure comprises 287 residues: Lipoyl synthase (287 aa).

Residues C34, C39, C45, C60, C64, C67, and S273 each coordinate [4Fe-4S] cluster. One can recognise a Radical SAM core domain in the interval 46 to 262; that stretch reads WNKRHATVMI…KYIAYSKGFL (217 aa).

This sequence belongs to the radical SAM superfamily. Lipoyl synthase family. [4Fe-4S] cluster serves as cofactor.

Its subcellular location is the cytoplasm. The catalysed reaction is [[Fe-S] cluster scaffold protein carrying a second [4Fe-4S](2+) cluster] + N(6)-octanoyl-L-lysyl-[protein] + 2 oxidized [2Fe-2S]-[ferredoxin] + 2 S-adenosyl-L-methionine + 4 H(+) = [[Fe-S] cluster scaffold protein] + N(6)-[(R)-dihydrolipoyl]-L-lysyl-[protein] + 4 Fe(3+) + 2 hydrogen sulfide + 2 5'-deoxyadenosine + 2 L-methionine + 2 reduced [2Fe-2S]-[ferredoxin]. Its pathway is protein modification; protein lipoylation via endogenous pathway; protein N(6)-(lipoyl)lysine from octanoyl-[acyl-carrier-protein]: step 2/2. Its function is as follows. Catalyzes the radical-mediated insertion of two sulfur atoms into the C-6 and C-8 positions of the octanoyl moiety bound to the lipoyl domains of lipoate-dependent enzymes, thereby converting the octanoylated domains into lipoylated derivatives. This is Lipoyl synthase from Wolbachia sp. subsp. Brugia malayi (strain TRS).